The sequence spans 319 residues: Proline hydroxylase buaE (319 aa).

Positions 168–280 (NSSELRLNHY…RYSIAYFGKP (113 aa)) constitute a Fe2OG dioxygenase domain. His-195, Asp-197, and His-255 together coordinate Fe cation. Residue Arg-271 participates in 2-oxoglutarate binding.

It belongs to the iron/ascorbate-dependent oxidoreductase family. It depends on Fe(2+) as a cofactor.

Its pathway is mycotoxin biosynthesis. Functionally, proline hydroxylase; part of the gene cluster that mediates the biosynthesis of burnettramic acids, an unusual class of bolaamphiphilic pyrrolizidinediones that display potent antibacterial, antifungal, and cytotoxic activities. The first step of the biosynthesis of burnettramic acids is the hydroxylation of proline by the proline hydroxylase buaE to generate 4-hydroxyproline. The PKS-NRPS buaA and trans-enoyl reductase buaC construct the highly reduced polyketide chain, and the condensation (C) domain of buaA then catalyzes the amide bond formation with the activated 4-hydroxyproline. This is followed by the R domain releasing the nascent polyketide-peptide directly via a Dieckmann condensation to afford a tetramic acid fused to the hydroxyproline, generating the bicyclic pyrrolidinedione moiety. The cytochrome P450 monooxygenases buaD and buaG are likely responsible for the multiple hydroxylations on the polyketide chain and its terminus, although in the heterologous context, buaD does not appear to be required. Therefore, while buaG may be a multifunctional cytochrome P450 monooxygenase, it cannot be ruled out that the two secondary alcohols on the polyketide chain could have an acetate origin. Finally, the glycosyltransferase buaB transfers beta-D-mannose to the aglycone burnettramic acid A to form burnettramic acid A. Burnettramic acid B is a minor cis-pyrrolizidine epimer of burnettramic acid A and it is likely that small amounts of it form naturally in acidic environments. The chain is Proline hydroxylase buaE from Petromyces alliaceus (Aspergillus alliaceus).